A 377-amino-acid polypeptide reads, in one-letter code: NAC domain-containing protein 76 (377 aa).

Residues 10 to 159 (VPPGFRFHPT…GWVVCRAFKK (150 aa)) form the NAC domain. The DNA-binding element occupies 110–165 (IGMRKTLVFYKGRAPNGQKTDWIMHEYRLESDENAPPQEEGWVVCRAFKKKPMTGQ). Residues 312 to 347 (GVSGFGGHHEEDNNKIGHYNNEESNNKGSVETASST) are disordered. The segment covering 318-336 (GHHEEDNNKIGHYNNEESN) has biased composition (basic and acidic residues). The segment covering 337–347 (NKGSVETASST) has biased composition (polar residues).

It belongs to the plant vascular related NAC-domain protein family. Interacts with NAC030/VND7. In terms of tissue distribution, detected in root protoxylem and metaxylem poles and in vessels of protoxylems, outermost metaxylems, inner metaxylems, shoots and hypocotyls. Expressed in roots, hypocotyls, cotyledons and leaves. Present in developing xylems. Specifically expressed in vessels but not in interfascicular fibers in stems.

Its subcellular location is the nucleus. Transcription activator that binds to the secondary wall NAC binding element (SNBE), 5'-(T/A)NN(C/T)(T/C/G)TNNNNNNNA(A/C)GN(A/C/T)(A/T)-3', in the promoter of target genes. Involved in xylem formation by promoting the expression of secondary wall-associated transcription factors and of genes involved in secondary wall biosynthesis and programmed cell death, genes driven by the secondary wall NAC binding element (SNBE). Triggers thickening of secondary walls. The protein is NAC domain-containing protein 76 of Arabidopsis thaliana (Mouse-ear cress).